The sequence spans 190 residues: Elongation factor P (190 aa).

Lysine 34 carries the post-translational modification N6-(3,6-diaminohexanoyl)-5-hydroxylysine.

This sequence belongs to the elongation factor P family. In terms of processing, may be beta-lysylated on the epsilon-amino group of Lys-34 by the combined action of EpmA and EpmB, and then hydroxylated on the C5 position of the same residue by EpmC (if this protein is present). Lysylation is critical for the stimulatory effect of EF-P on peptide-bond formation. The lysylation moiety may extend toward the peptidyltransferase center and stabilize the terminal 3-CCA end of the tRNA. Hydroxylation of the C5 position on Lys-34 may allow additional potential stabilizing hydrogen-bond interactions with the P-tRNA.

The protein localises to the cytoplasm. It participates in protein biosynthesis; polypeptide chain elongation. Functionally, involved in peptide bond synthesis. Alleviates ribosome stalling that occurs when 3 or more consecutive Pro residues or the sequence PPG is present in a protein, possibly by augmenting the peptidyl transferase activity of the ribosome. Modification of Lys-34 is required for alleviation. The polypeptide is Elongation factor P (Hahella chejuensis (strain KCTC 2396)).